Consider the following 785-residue polypeptide: 5-methyltetrahydropteroyltriglutamate--homocysteine methyltransferase (785 aa).

5-methyltetrahydropteroyltri-L-glutamate is bound by residues 15–18 and lysine 121; that span reads RELK. L-homocysteine-binding positions include 460–462 and glutamate 513; that span reads IGS. L-methionine-binding positions include 460–462 and glutamate 513; that span reads IGS. Residues 544-545 and tryptophan 590 each bind 5-methyltetrahydropteroyltri-L-glutamate; that span reads RC. Aspartate 628 provides a ligand contact to L-homocysteine. L-methionine is bound at residue aspartate 628. A 5-methyltetrahydropteroyltri-L-glutamate-binding site is contributed by glutamate 634. Residues histidine 670, cysteine 672, and glutamate 694 each coordinate Zn(2+). Histidine 723 serves as the catalytic Proton donor. Position 755 (cysteine 755) interacts with Zn(2+).

It belongs to the vitamin-B12 independent methionine synthase family. Zn(2+) is required as a cofactor.

The enzyme catalyses 5-methyltetrahydropteroyltri-L-glutamate + L-homocysteine = tetrahydropteroyltri-L-glutamate + L-methionine. It participates in amino-acid biosynthesis; L-methionine biosynthesis via de novo pathway; L-methionine from L-homocysteine (MetE route): step 1/1. Its function is as follows. Catalyzes the transfer of a methyl group from 5-methyltetrahydrofolate to homocysteine resulting in methionine formation. This Nitratidesulfovibrio vulgaris (strain ATCC 29579 / DSM 644 / CCUG 34227 / NCIMB 8303 / VKM B-1760 / Hildenborough) (Desulfovibrio vulgaris) protein is 5-methyltetrahydropteroyltriglutamate--homocysteine methyltransferase.